Consider the following 255-residue polypeptide: MFNSDNLRLDGKCAIITGAGAGIGKEIAITFATAGASVVVSDINADAANHVVDEIQQLGGQAFACRCDITSEQELSALADFAISKLGKVDILVNNAGGGGPKPFDMPMADFRRAYELNVFSFFHLSQLVAPEMEKNGGGVILTITSMAAENKNINMTSYASSKAAASHLVRNMAFDLGEKNIRVNGIAPGAILTDALKSVITPEIEQKMLQHTPIRRLGQPQDIANAALFLCSPAASWVSGQILTVSGGGVQELN.

NAD(+) is bound by residues Ile-23, 42 to 43 (DI), 68 to 69 (DI), and Asn-95. Glycochenodeoxycholate is bound by residues Gly-99, Ser-146, Asn-151, and Tyr-159. Residues Tyr-159, Lys-163, and 192-194 (ILT) each bind NAD(+). Tyr-159 acts as the Proton acceptor in catalysis.

Belongs to the short-chain dehydrogenases/reductases (SDR) family. As to quaternary structure, homotetramer.

It carries out the reaction cholate + NAD(+) = 3alpha,12alpha-dihydroxy-7-oxo-5beta-cholanate + NADH + H(+). The catalysed reaction is chenodeoxycholate + NAD(+) = 7-oxolithocholate + NADH + H(+). The enzyme catalyses taurochenodeoxycholate + NAD(+) = 7-oxotaurolithocholate + NADH + H(+). It catalyses the reaction taurocholate + NAD(+) = 7-oxo-taurodeoxycholate + NADH + H(+). It carries out the reaction glycocholate + NAD(+) = 7-oxo-glycodeoxycholate + NADH + H(+). The catalysed reaction is glycochenodeoxycholate + NAD(+) = 7-oxoglycolithocholate + NADH + H(+). In terms of biological role, 7alpha-hydroxysteroid dehydrogenase involved in the metabolism of bile acids. Catalyzes the NAD(+)-dependent oxidation of the 7alpha-hydroxy group of 7alpha-hydroxysteroids, such as the major human bile acids cholate and chenodeoxycholate, to the corresponding 7-oxosteroids. To a lesser extent, can also act on taurochenodeoxycholate, taurocholate and glycocholate. Can also use glycochenodeoxycholate as substrate. Is not able to use NADP(+) instead of NAD(+) as the electron acceptor. The chain is 7alpha-hydroxysteroid dehydrogenase (hdhA) from Escherichia coli O157:H7.